The following is a 466-amino-acid chain: Adenosylhomocysteinase (466 aa).

Substrate-binding residues include T57, D132, and E192. 193–195 (TTT) contacts NAD(+). The substrate site is built by K222 and D226. NAD(+) contacts are provided by residues N227, 256-261 (GYGDVG), E279, N314, 335-337 (IGH), and N380.

It belongs to the adenosylhomocysteinase family. Requires NAD(+) as cofactor.

It localises to the cytoplasm. It carries out the reaction S-adenosyl-L-homocysteine + H2O = L-homocysteine + adenosine. It functions in the pathway amino-acid biosynthesis; L-homocysteine biosynthesis; L-homocysteine from S-adenosyl-L-homocysteine: step 1/1. Functionally, may play a key role in the regulation of the intracellular concentration of adenosylhomocysteine. In Rhizobium etli (strain CIAT 652), this protein is Adenosylhomocysteinase.